Reading from the N-terminus, the 337-residue chain is 2-oxoglutarate-dependent ethylene/succinate-forming enzyme (337 aa).

Residues glycine 166–proline 286 enclose the Fe2OG dioxygenase domain. Fe cation contacts are provided by histidine 189 and histidine 268.

This sequence belongs to the iron/ascorbate-dependent oxidoreductase family. In terms of assembly, monomer. It depends on Fe(2+) as a cofactor.

The catalysed reaction is 2-oxoglutarate + O2 + 2 H(+) = ethene + 3 CO2 + H2O. The enzyme catalyses L-arginine + 2-oxoglutarate + O2 = guanidine + L-glutamate 5-semialdehyde + succinate + CO2. The protein operates within alkene biosynthesis; ethylene biosynthesis via 2-oxoglutarate. In terms of biological role, simultaneously catalyzes two reactions, namely formation of ethylene and of succinate from 2-oxoglutarate. The chain is 2-oxoglutarate-dependent ethylene/succinate-forming enzyme (efe) from Pseudomonas syringae pv. pisi.